We begin with the raw amino-acid sequence, 284 residues long: HTH-type transcriptional activator RhaR (284 aa).

Residues 181–279 (DMLMNALRAS…GVSPSAYRQR (99 aa)) enclose the HTH araC/xylS-type domain. 2 DNA-binding regions (H-T-H motif) span residues 198–219 (EAFC…KEQT) and 246–269 (IGDV…HQAF).

Binds DNA as a dimer.

The protein resides in the cytoplasm. In terms of biological role, activates expression of the rhaSR operon in response to L-rhamnose. The polypeptide is HTH-type transcriptional activator RhaR (Pectobacterium atrosepticum (strain SCRI 1043 / ATCC BAA-672) (Erwinia carotovora subsp. atroseptica)).